The chain runs to 251 residues: Hydroxyacylglutathione hydrolase (251 aa).

Zn(2+) contacts are provided by His-53, His-55, Asp-57, His-58, His-110, Asp-127, and His-165.

It belongs to the metallo-beta-lactamase superfamily. Glyoxalase II family. In terms of assembly, monomer. Requires Zn(2+) as cofactor.

The catalysed reaction is an S-(2-hydroxyacyl)glutathione + H2O = a 2-hydroxy carboxylate + glutathione + H(+). The protein operates within secondary metabolite metabolism; methylglyoxal degradation; (R)-lactate from methylglyoxal: step 2/2. Its function is as follows. Thiolesterase that catalyzes the hydrolysis of S-D-lactoyl-glutathione to form glutathione and D-lactic acid. The protein is Hydroxyacylglutathione hydrolase of Cronobacter sakazakii (strain ATCC BAA-894) (Enterobacter sakazakii).